The following is a 381-amino-acid chain: UDP-4-amino-4-deoxy-L-arabinose--oxoglutarate aminotransferase (381 aa).

Lys182 carries the post-translational modification N6-(pyridoxal phosphate)lysine.

It belongs to the DegT/DnrJ/EryC1 family. ArnB subfamily. In terms of assembly, homodimer. The cofactor is pyridoxal 5'-phosphate.

It catalyses the reaction UDP-4-amino-4-deoxy-beta-L-arabinose + 2-oxoglutarate = UDP-beta-L-threo-pentopyranos-4-ulose + L-glutamate. It functions in the pathway nucleotide-sugar biosynthesis; UDP-4-deoxy-4-formamido-beta-L-arabinose biosynthesis; UDP-4-deoxy-4-formamido-beta-L-arabinose from UDP-alpha-D-glucuronate: step 2/3. Its pathway is bacterial outer membrane biogenesis; lipopolysaccharide biosynthesis. In terms of biological role, catalyzes the conversion of UDP-4-keto-arabinose (UDP-Ara4O) to UDP-4-amino-4-deoxy-L-arabinose (UDP-L-Ara4N). The modified arabinose is attached to lipid A and is required for resistance to polymyxin and cationic antimicrobial peptides. The chain is UDP-4-amino-4-deoxy-L-arabinose--oxoglutarate aminotransferase from Proteus mirabilis (strain HI4320).